Consider the following 185-residue polypeptide: Shikimate kinase (185 aa).

21–26 (GVGKTT) provides a ligand contact to ATP. Position 25 (Thr25) interacts with Mg(2+). Substrate is bound by residues Asp43, Arg67, and Gly90. Residue Arg129 participates in ATP binding. Position 147 (Arg147) interacts with substrate.

Belongs to the shikimate kinase family. Monomer. It depends on Mg(2+) as a cofactor.

It localises to the cytoplasm. It carries out the reaction shikimate + ATP = 3-phosphoshikimate + ADP + H(+). It functions in the pathway metabolic intermediate biosynthesis; chorismate biosynthesis; chorismate from D-erythrose 4-phosphate and phosphoenolpyruvate: step 5/7. Functionally, catalyzes the specific phosphorylation of the 3-hydroxyl group of shikimic acid using ATP as a cosubstrate. This Bacillus pumilus (strain SAFR-032) protein is Shikimate kinase.